The chain runs to 704 residues: CAP-Gly domain-containing linker protein 4 (704 aa).

3 ANK repeats span residues 65–101 (TSVSELFAILRQWVPQVQQNIDIIGNEILKRGCNVND), 149–180 (TNMNALHYASYFDVPELIRVILKTSKPKDVDA), and 186–215 (NFGTALHIAAHNLCAGAVKTLLELGANPAF). One can recognise a CAP-Gly 1 domain in the interval 303 to 345 (GTTEFASGQWAGIELDEPEGKNNGSVGRVQYFKCAPKYGIFAP). Residues 353–479 (KDGRKTTTHT…SATSAANNSH (127 aa)) form a disordered region. 3 stretches are compositionally biased toward low complexity: residues 360 to 371 (THTPSTRATPHA), 423 to 432 (SMSSSSSSSS), and 440 to 461 (PKKLTTSSGGKKTLSKSPSLPS). Positions 504-546 (GTTNFAPGYWYGIELEKPHGKNDGSVGGVQYFSCSPRYGIFAP) constitute a CAP-Gly 2 domain. Phosphoserine occurs at positions 556 and 608. One can recognise a CAP-Gly 3 domain in the interval 643–685 (GPTDFASGIWLGLELRSAKGKNDGAVGDKRYFTCKPNYGVLVR).

In Mus musculus (Mouse), this protein is CAP-Gly domain-containing linker protein 4 (Clip4).